The chain runs to 1745 residues: Intraflagellar transport protein 172 homolog (1745 aa).

WD repeat units lie at residues 14 to 53 (DGAA…RDRF), 64 to 103 (KKTY…GDKK), 110 to 148 (IQTS…SSTI), 150 to 190 (GTDS…GESQ), 195 to 233 (THAC…QTFD), 238 to 278 (RAEK…WDES), 284 to 323 (PNLY…SIYK), 483 to 521 (SHDS…VKST), 522 to 559 (MLSF…ERVT), and 680 to 725 (DHYQ…DECI). TPR repeat units follow at residues 691–725 (LDKN…DECI), 750–784 (TNQN…KAAW), 809–842 (GEFY…KKAV), 854–887 (VKLE…IKAI), 912–945 (AKYY…KDAI), 947–971 (MYTQ…EDVS), 972–1004 (VLYV…DLAI), 1042–1075 (ESRF…EEAY), 1272–1305 (VEGM…SNLD), 1328–1361 (VDVS…KNAI), and 1407–1441 (GVDV…LHKY).

Belongs to the IFT172 family.

It is found in the cell projection. The protein resides in the cilium. Its function is as follows. Required for the maintenance and formation of cilia. The polypeptide is Intraflagellar transport protein 172 homolog (ift172) (Danio rerio (Zebrafish)).